A 101-amino-acid chain; its full sequence is MGTRFLLALFLVLLVLGLEVQADPESRQDEPASPALLAQMRESFSSYWDSAKAAAQDLYQKTYLPAVDERIRDMYSKSTAAVTTYAGIFTDQLFSMLKGEQ.

Positions 1-22 are cleaved as a signal peptide; the sequence is MGTRFLLALFLVLLVLGLEVQA. Residues 66–74 form a lipid binding region; sequence AVDERIRDM. Residues 78–101 form a lipoprotein lipase cofactor region; it reads STAAVTTYAGIFTDQLFSMLKGEQ.

Belongs to the apolipoprotein C2 family. Post-translationally, proapolipoprotein C-II is synthesized as a sialic acid containing glycoprotein which is subsequently desialylated prior to its proteolytic processing. Proapolipoprotein C-II, the major form found in plasma undergoes proteolytic cleavage of its N-terminal hexapeptide to generate apolipoprotein C-II, which occurs as the minor form in plasma.

The protein localises to the secreted. Functionally, component of chylomicrons, very low-density lipoproteins (VLDL), low-density lipoproteins (LDL), and high-density lipoproteins (HDL) in plasma. Plays an important role in lipoprotein metabolism as an activator of lipoprotein lipase. Both proapolipoprotein C-II and apolipoprotein C-II can activate lipoprotein lipase. The polypeptide is Apolipoprotein C-II (APOC2) (Tupaia glis (Common tree shrew)).